Consider the following 110-residue polypeptide: Protein RALF-like 19 (110 aa).

Positions M1–A23 are cleaved as a signal peptide. Residues T24–A58 constitute a propeptide, removed in mature form. 2 cysteine pairs are disulfide-bonded: C76–C86 and C99–C105.

It belongs to the plant rapid alkalinization factor (RALF) family. Post-translationally, proteolytically cleaved, probably by S1P, a subtilisin-like serine protease (subtilase).

It is found in the secreted. In terms of biological role, cell signaling peptide that may regulate plant stress, growth, and development. Mediates a rapid alkalinization of extracellular space by mediating a transient increase in the cytoplasmic Ca(2+) concentration leading to a calcium-dependent signaling events through a cell surface receptor and a concomitant activation of some intracellular mitogen-activated protein kinases. The polypeptide is Protein RALF-like 19 (RALFL19) (Arabidopsis thaliana (Mouse-ear cress)).